Consider the following 321-residue polypeptide: Probable pectate lyase A (321 aa).

Positions 1-18 (MKFVATLIACGLSGLALA) are cleaved as a signal peptide. N-linked (GlcNAc...) asparagine glycosylation occurs at Asn93. 3 residues coordinate Ca(2+): Asp134, Asp163, and Asp167. Arg220 is an active-site residue. Asn238 carries N-linked (GlcNAc...) asparagine glycosylation.

Belongs to the polysaccharide lyase 1 family. Requires Ca(2+) as cofactor.

The protein resides in the secreted. The enzyme catalyses Eliminative cleavage of (1-&gt;4)-alpha-D-galacturonan to give oligosaccharides with 4-deoxy-alpha-D-galact-4-enuronosyl groups at their non-reducing ends.. Pectinolytic enzyme consist of four classes of enzymes: pectin lyase, polygalacturonase, pectin methylesterase and rhamnogalacturonase. Among pectinolytic enzymes, pectin lyase is the most important in depolymerization of pectin, since it cleaves internal glycosidic bonds of highly methylated pectins. Favors pectate, the anion, over pectin, the methyl ester. The protein is Probable pectate lyase A (plyA) of Aspergillus fumigatus (strain ATCC MYA-4609 / CBS 101355 / FGSC A1100 / Af293) (Neosartorya fumigata).